The primary structure comprises 354 residues: Nucleoporin seh1 (354 aa).

WD repeat units lie at residues 10–49 (DHKD…KWNV), 55–96 (AHSG…KVSS), 112–153 (DSRT…NLSQ), 161–209 (SNKL…RKCV), 216–259 (DITD…TDIS), and 270–309 (EHNC…QWRC).

Belongs to the WD repeat SEC13 family. As to quaternary structure, probable component of the nuclear pore complex (NPC). Component of the GATOR complex consisting of mio, Nup44A/Seh1, Im11, Nplr3, Nplr2, Wdr24, Wdr59 and Sec13. Within the GATOR complex, probable component of the GATOR2 subcomplex which is likely composed of mio, Nup44A/Seh1, Wdr24, Wdr59 and Sec13. Interacts with mio. Interacts with Wdr24. The GATOR2 complex associates with unmet in the absence of S-adenosyl-L-methionine; the mio-Wdr24-Nup44A subcomplex is essential and sufficient for this interaction while Wdr59 and Sec13 are dispensable. This association acts as a nutrient sensor to inhibit mTORC1 signaling in the absence of methionine. Expressed in ovarian cysts.

It localises to the nucleus envelope. The protein localises to the lysosome. In terms of biological role, probable component of the nuclear pore complex (NPC). Involved in maintaining the localization of another nucleoporin Mgtor to the nuclear envelope of early meiotic female germline cells. It is not involved in recruiting the nucleoporins Mgtor, Nup107, Nup153 and FG-containing nucleoporins to the NPC. Its function is as follows. An essential component of the GATOR subcomplex GATOR2 which functions as an activator of the amino acid-sensing branch of the mTORC1 signaling pathway. The two GATOR subcomplexes, GATOR1 and GATOR2, regulate the mTORC1 pathway in order to mediate metabolic homeostasis, female gametogenesis and the response to amino acid limitation and complete starvation. GATOR2 activates the mTORC1 signaling pathway through the inhibition of the GATOR1 subcomplex, controlling the switch to cell proliferation growth under nutrient replete conditions and growth during female oocyte development. This component is required for activating mTORC1 specifically in germline cells to promote cell growth and maintain the oocyte fate, probably influences the organization and/or function of microtubules within ovarian cysts, and promotes accumulation of another GATOR2 complex member mio in germline and somatic tissues. GATOR1 and GATOR2 act at different stages of oogenesis to regulate mTORC1 in order to control meiotic entry and promote oocyte growth and development. After exactly four mitotic cyst divisions, the GATOR1 complex members (Iml1, Nprl2 and Nprl3) down-regulate mTORC1 to slow cellular metabolism and promote the mitotic/meiotic transition. At later stages of oogenesis, the mio and Nup44A components of the GATOR2 complex inhibit GATOR1 and thus activate mTORC1 to promote meiotic progression, and drive oocyte growth and development. In addition to its role in the regulation of the mTORC1 complex, functions independently of mTORC1 to prevent the inappropriate accumulation of autolysosomes in germline tissues. The chain is Nucleoporin seh1 from Drosophila melanogaster (Fruit fly).